Reading from the N-terminus, the 177-residue chain is Large ribosomal subunit protein uL6 (177 aa).

Belongs to the universal ribosomal protein uL6 family. Part of the 50S ribosomal subunit.

Its function is as follows. This protein binds to the 23S rRNA, and is important in its secondary structure. It is located near the subunit interface in the base of the L7/L12 stalk, and near the tRNA binding site of the peptidyltransferase center. This Rickettsia massiliae (strain Mtu5) protein is Large ribosomal subunit protein uL6.